We begin with the raw amino-acid sequence, 497 residues long: Serine hydroxymethyltransferase (497 aa).

Residues leucine 176 and 180-182 (GHL) each bind (6S)-5,6,7,8-tetrahydrofolate. Lysine 289 carries the N6-(pyridoxal phosphate)lysine modification. Glutamate 306 is a binding site for (6S)-5,6,7,8-tetrahydrofolate.

Belongs to the SHMT family. As to quaternary structure, homodimer. Pyridoxal 5'-phosphate is required as a cofactor.

It is found in the cytoplasm. The enzyme catalyses (6R)-5,10-methylene-5,6,7,8-tetrahydrofolate + glycine + H2O = (6S)-5,6,7,8-tetrahydrofolate + L-serine. Its pathway is one-carbon metabolism; tetrahydrofolate interconversion. The protein operates within amino-acid biosynthesis; glycine biosynthesis; glycine from L-serine: step 1/1. Catalyzes the reversible interconversion of serine and glycine with tetrahydrofolate (THF) serving as the one-carbon carrier. This reaction serves as the major source of one-carbon groups required for the biosynthesis of purines, thymidylate, methionine, and other important biomolecules. Also exhibits THF-independent aldolase activity toward beta-hydroxyamino acids, producing glycine and aldehydes, via a retro-aldol mechanism. This is Serine hydroxymethyltransferase from Chlamydia pneumoniae (Chlamydophila pneumoniae).